Consider the following 241-residue polypeptide: MGQKIHPIGFRLGITADHKSCWYADSKRYPETLQEDRQIRQYITKNLSNAGISDIRIERKADQVDLAIHTARPGVVVGRGGSGIEQLRLGLQQDLGGNRQIRINVIEVQRVDADAMLIAEYITQQLERRVSFRRVVRQAIQRAQRAEVKGIKIQVSGRLNGAEIARTEWVREGRVPLHTLRADIDYAYRTAQTIYGILGVKVWVFKGEIIPGQEEIPMPVPSQTPRRQRRRQQFEDRSGEE.

Positions 39 to 109 (IRQYITKNLS…QIRINVIEVQ (71 aa)) constitute a KH type-2 domain. A disordered region spans residues 214–241 (EEIPMPVPSQTPRRQRRRQQFEDRSGEE). Basic and acidic residues predominate over residues 232–241 (QQFEDRSGEE).

This sequence belongs to the universal ribosomal protein uS3 family. As to quaternary structure, part of the 30S ribosomal subunit. Forms a tight complex with proteins S10 and S14.

Functionally, binds the lower part of the 30S subunit head. Binds mRNA in the 70S ribosome, positioning it for translation. This chain is Small ribosomal subunit protein uS3, found in Rippkaea orientalis (strain PCC 8801 / RF-1) (Cyanothece sp. (strain PCC 8801)).